The following is a 299-amino-acid chain: Formamidopyrimidine-DNA glycosylase (299 aa).

Catalysis depends on Pro2, which acts as the Schiff-base intermediate with DNA. The Proton donor role is filled by Glu3. Catalysis depends on Lys58, which acts as the Proton donor; for beta-elimination activity. Positions 106, 125, and 168 each coordinate DNA. The FPG-type zinc-finger motif lies at 259–295 (RVYDRVGHACPTKGCTGRVGRIVQGGRSTFFCETCQV). Arg285 functions as the Proton donor; for delta-elimination activity in the catalytic mechanism.

This sequence belongs to the FPG family. As to quaternary structure, monomer. Zn(2+) serves as cofactor.

It carries out the reaction Hydrolysis of DNA containing ring-opened 7-methylguanine residues, releasing 2,6-diamino-4-hydroxy-5-(N-methyl)formamidopyrimidine.. The catalysed reaction is 2'-deoxyribonucleotide-(2'-deoxyribose 5'-phosphate)-2'-deoxyribonucleotide-DNA = a 3'-end 2'-deoxyribonucleotide-(2,3-dehydro-2,3-deoxyribose 5'-phosphate)-DNA + a 5'-end 5'-phospho-2'-deoxyribonucleoside-DNA + H(+). Involved in base excision repair of DNA damaged by oxidation or by mutagenic agents. Acts as a DNA glycosylase that recognizes and removes damaged bases. Has a preference for oxidized purines, such as 7,8-dihydro-8-oxoguanine (8-oxoG). Has AP (apurinic/apyrimidinic) lyase activity and introduces nicks in the DNA strand. Cleaves the DNA backbone by beta-delta elimination to generate a single-strand break at the site of the removed base with both 3'- and 5'-phosphates. The sequence is that of Formamidopyrimidine-DNA glycosylase from Methylorubrum extorquens (strain CM4 / NCIMB 13688) (Methylobacterium extorquens).